Consider the following 419-residue polypeptide: L-2-hydroxyglutarate dehydrogenase, mitochondrial (419 aa).

The transit peptide at 1 to 51 (MVPALRYLVGACGRARGGFAGDFPGASGLASGRPRPLCGGSRSASTSSFDI) directs the protein to the mitochondrion. Residues Lys104 and Lys173 each carry the N6-acetyllysine modification.

Belongs to the L2HGDH family. FAD serves as cofactor.

Its subcellular location is the mitochondrion. It catalyses the reaction (S)-2-hydroxyglutarate + A = 2-oxoglutarate + AH2. The sequence is that of L-2-hydroxyglutarate dehydrogenase, mitochondrial (L2HGDH) from Pongo abelii (Sumatran orangutan).